A 299-amino-acid chain; its full sequence is Xyloglucan endotransglucosylase protein 6 (299 aa).

Positions Met-1–Gly-25 are cleaved as a signal peptide. The 194-residue stretch at Gly-26–Tyr-219 folds into the GH16 domain. Glu-105 serves as the catalytic Nucleophile. Residue Glu-109 is the Proton donor of the active site. Xyloglucan is bound at residue Glu-109. Asn-113 is a glycosylation site (N-linked (GlcNAc...) asparagine). Residues Gln-122–Asn-124, Asn-132–Glu-134, Asp-198–Trp-199, and Gly-203 contribute to the xyloglucan site. 2 cysteine pairs are disulfide-bonded: Cys-227/Cys-242 and Cys-281/Cys-294. Residue Arg-286 coordinates xyloglucan.

The protein belongs to the glycosyl hydrolase 16 family. XTH group 1 subfamily. In terms of processing, contains at least one intrachain disulfide bond essential for its enzymatic activity. In terms of tissue distribution, highest expression in ripe leaves after full expansion. Also expressed in fruits, and at a lower level in flowers and stems (picked at anthesis).

It localises to the secreted. Its subcellular location is the cell wall. It is found in the extracellular space. The protein resides in the apoplast. The enzyme catalyses breaks a beta-(1-&gt;4) bond in the backbone of a xyloglucan and transfers the xyloglucanyl segment on to O-4 of the non-reducing terminal glucose residue of an acceptor, which can be a xyloglucan or an oligosaccharide of xyloglucan.. Its function is as follows. Catalyzes xyloglucan endotransglycosylation (XET). Cleaves and religates xyloglucan polymers. Does not catalyze xyloglucan endohydrolysis (XEH). Probably involved in cell wall restructuring during postharvest fruit softening. In Diospyros kaki (Kaki persimmon), this protein is Xyloglucan endotransglucosylase protein 6.